Here is a 179-residue protein sequence, read N- to C-terminus: Large ribosomal subunit protein uL6 (179 aa).

Belongs to the universal ribosomal protein uL6 family. Part of the 50S ribosomal subunit.

Its function is as follows. This protein binds to the 23S rRNA, and is important in its secondary structure. It is located near the subunit interface in the base of the L7/L12 stalk, and near the tRNA binding site of the peptidyltransferase center. In Fructilactobacillus sanfranciscensis (Lactobacillus sanfranciscensis), this protein is Large ribosomal subunit protein uL6.